The sequence spans 320 residues: Endolytic peptidoglycan transglycosylase RlpA (320 aa).

The protein belongs to the RlpA family.

Functionally, lytic transglycosylase with a strong preference for naked glycan strands that lack stem peptides. This is Endolytic peptidoglycan transglycosylase RlpA from Rickettsia typhi (strain ATCC VR-144 / Wilmington).